Reading from the N-terminus, the 548-residue chain is Chaperonin GroEL (548 aa).

Residues 30–33 (TLGP), Lys-51, 87–91 (DGTTT), Gly-415, 479–481 (NAA), and Asp-495 each bind ATP.

Belongs to the chaperonin (HSP60) family. Forms a cylinder of 14 subunits composed of two heptameric rings stacked back-to-back. Interacts with the co-chaperonin GroES.

Its subcellular location is the cytoplasm. It carries out the reaction ATP + H2O + a folded polypeptide = ADP + phosphate + an unfolded polypeptide.. Together with its co-chaperonin GroES, plays an essential role in assisting protein folding. The GroEL-GroES system forms a nano-cage that allows encapsulation of the non-native substrate proteins and provides a physical environment optimized to promote and accelerate protein folding. The chain is Chaperonin GroEL from Proteus mirabilis (strain HI4320).